Consider the following 465-residue polypeptide: Sodium-dependent phosphate transport protein 1 (465 aa).

3 N-linked (GlcNAc...) asparagine glycosylation sites follow: N39, N47, and N56. The next 10 membrane-spanning stretches (helical) occupy residues G79–L99, S117–C137, F176–W196, V199–F219, L260–V280, G299–M319, L337–S357, T363–I383, V399–L419, and F431–G451.

It belongs to the major facilitator superfamily. Sodium/anion cotransporter family. In terms of assembly, interacts with PDZK1.

The protein localises to the apical cell membrane. It carries out the reaction 3 Na(+)(out) + phosphate(out) = 3 Na(+)(in) + phosphate(in). The enzyme catalyses urate(out) = urate(in). Important for the resorption of phosphate by the kidney. May be involved in actively transporting phosphate into cells via Na(+) cotransport in the renal brush border membrane. Plays a role in urate transport in the kidney. In Rattus norvegicus (Rat), this protein is Sodium-dependent phosphate transport protein 1 (Slc17a1).